Consider the following 226-residue polypeptide: Thiopurine S-methyltransferase (226 aa).

4 residues coordinate S-adenosyl-L-methionine: Trp-10, Leu-47, Glu-68, and Arg-130.

This sequence belongs to the class I-like SAM-binding methyltransferase superfamily. TPMT family.

It localises to the cytoplasm. It carries out the reaction S-adenosyl-L-methionine + a thiopurine = S-adenosyl-L-homocysteine + a thiopurine S-methylether.. The polypeptide is Thiopurine S-methyltransferase (Shewanella sediminis (strain HAW-EB3)).